Consider the following 214-residue polypeptide: MADS-box protein CMB2 (214 aa).

The MADS-box domain maps to 3–58 (RGKLEIRKIENKTNRQVTFSKRRNGIMKKAQELTVLCDAKVSLLMISSTHKLHHYL). The 91-residue stretch at 84-174 (WERMQEQHRK…VMELEAKFRG (91 aa)) folds into the K-box domain.

In terms of tissue distribution, in flowers. Not found in vegetative tissues.

It is found in the nucleus. The sequence is that of MADS-box protein CMB2 (CMB2) from Dianthus caryophyllus (Carnation).